The primary structure comprises 142 residues: uncharacterized protein (142 aa).

Residues 18–137 (QSRSYSCGPA…RIFTGNVLVV (120 aa)) form the Peptidase C39 domain.

This is an uncharacterized protein from Methanothermobacter thermautotrophicus (strain ATCC 29096 / DSM 1053 / JCM 10044 / NBRC 100330 / Delta H) (Methanobacterium thermoautotrophicum).